A 116-amino-acid polypeptide reads, in one-letter code: Large ribosomal subunit protein uL22 (116 aa).

It belongs to the universal ribosomal protein uL22 family. In terms of assembly, part of the 50S ribosomal subunit.

Its function is as follows. This protein binds specifically to 23S rRNA; its binding is stimulated by other ribosomal proteins, e.g. L4, L17, and L20. It is important during the early stages of 50S assembly. It makes multiple contacts with different domains of the 23S rRNA in the assembled 50S subunit and ribosome. In terms of biological role, the globular domain of the protein is located near the polypeptide exit tunnel on the outside of the subunit, while an extended beta-hairpin is found that lines the wall of the exit tunnel in the center of the 70S ribosome. This chain is Large ribosomal subunit protein uL22, found in Wolbachia pipientis subsp. Culex pipiens (strain wPip).